The following is a 491-amino-acid chain: [Pyruvate dehydrogenase (acetyl-transferring)] kinase 2, mitochondrial (491 aa).

Residues 153–480 (PTIRTLEDAS…DVVLKLGNLM (328 aa)) enclose the Histidine kinase domain. Residues 300–307 (EILRNTYE), Asp-341, 359–360 (SK), and 383–446 (DEVH…GIGL) contribute to the ATP site.

Belongs to the PDK/BCKDK protein kinase family. Interacts with PKP1.

The protein localises to the mitochondrion matrix. The catalysed reaction is L-seryl-[pyruvate dehydrogenase E1 alpha subunit] + ATP = O-phospho-L-seryl-[pyruvate dehydrogenase E1 alpha subunit] + ADP + H(+). Inhibits the mitochondrial pyruvate dehydrogenase complex by phosphorylation of the E1 alpha subunit (PDA1), thus contributing to the regulation of glucose metabolism. In Saccharomyces cerevisiae (strain ATCC 204508 / S288c) (Baker's yeast), this protein is [Pyruvate dehydrogenase (acetyl-transferring)] kinase 2, mitochondrial.